Consider the following 426-residue polypeptide: Glutamyl-tRNA reductase (426 aa).

Substrate-binding positions include 49 to 52 (TCNR), Ser-109, 114 to 116 (EGQ), and Gln-120. Cys-50 functions as the Nucleophile in the catalytic mechanism. 189–194 (GAGETG) contacts NADP(+).

Belongs to the glutamyl-tRNA reductase family. Homodimer.

The enzyme catalyses (S)-4-amino-5-oxopentanoate + tRNA(Glu) + NADP(+) = L-glutamyl-tRNA(Glu) + NADPH + H(+). Its pathway is porphyrin-containing compound metabolism; protoporphyrin-IX biosynthesis; 5-aminolevulinate from L-glutamyl-tRNA(Glu): step 1/2. It participates in porphyrin-containing compound metabolism; chlorophyll biosynthesis. Its function is as follows. Catalyzes the NADPH-dependent reduction of glutamyl-tRNA(Glu) to glutamate 1-semialdehyde (GSA). The sequence is that of Glutamyl-tRNA reductase from Chlorobium chlorochromatii (strain CaD3).